Consider the following 136-residue polypeptide: Small ribosomal subunit protein uS19 (136 aa).

This sequence belongs to the universal ribosomal protein uS19 family.

Protein S19 forms a complex with S13 that binds strongly to the 16S ribosomal RNA. This Methanosphaera stadtmanae (strain ATCC 43021 / DSM 3091 / JCM 11832 / MCB-3) protein is Small ribosomal subunit protein uS19.